A 405-amino-acid chain; its full sequence is Probable succinyl-diaminopimelate desuccinylase (405 aa).

Histidine 72 contacts Zn(2+). Aspartate 74 is an active-site residue. Zn(2+) is bound at residue aspartate 105. The Proton acceptor role is filled by glutamate 139. Zn(2+) contacts are provided by glutamate 140, glutamate 165, and histidine 377.

The protein belongs to the peptidase M20A family. Zn(2+) is required as a cofactor. The cofactor is Co(2+).

It catalyses the reaction N-succinyl-(2S,6S)-2,6-diaminopimelate + H2O = (2S,6S)-2,6-diaminopimelate + succinate. The protein operates within amino-acid biosynthesis; L-lysine biosynthesis via DAP pathway; LL-2,6-diaminopimelate from (S)-tetrahydrodipicolinate (succinylase route): step 3/3. In Staphylococcus epidermidis (strain ATCC 35984 / DSM 28319 / BCRC 17069 / CCUG 31568 / BM 3577 / RP62A), this protein is Probable succinyl-diaminopimelate desuccinylase (dapE).